A 347-amino-acid polypeptide reads, in one-letter code: SUMO-activating enzyme subunit 1 (347 aa).

The protein belongs to the ubiquitin-activating E1 family. In terms of assembly, heterodimer of sae1 and uba2/sae2. The heterodimer corresponds to the two domains that are encoded on a single polypeptide chain in ubiquitin-activating enzyme E1. Interacts with ube2i.

Its subcellular location is the nucleus. It functions in the pathway protein modification; protein sumoylation. In terms of biological role, the heterodimer acts as an E1 ligase for sumo1, sumo2, and sumo3. It mediates ATP-dependent activation of sumo proteins followed by formation of a thioester bond between a sumo protein and a conserved active site cysteine residue on uba2/sae2. The protein is SUMO-activating enzyme subunit 1 (sae1) of Xenopus tropicalis (Western clawed frog).